We begin with the raw amino-acid sequence, 171 residues long: Shikimate kinase (171 aa).

14–19 contacts ATP; the sequence is GAGKST. Serine 18 serves as a coordination point for Mg(2+). Substrate-binding residues include aspartate 36, arginine 60, and glycine 82. Arginine 120 is a binding site for ATP. Arginine 139 is a substrate binding site. Residue glutamine 156 coordinates ATP.

It belongs to the shikimate kinase family. Monomer. Mg(2+) serves as cofactor.

The protein localises to the cytoplasm. The enzyme catalyses shikimate + ATP = 3-phosphoshikimate + ADP + H(+). It functions in the pathway metabolic intermediate biosynthesis; chorismate biosynthesis; chorismate from D-erythrose 4-phosphate and phosphoenolpyruvate: step 5/7. Catalyzes the specific phosphorylation of the 3-hydroxyl group of shikimic acid using ATP as a cosubstrate. In Shewanella frigidimarina (strain NCIMB 400), this protein is Shikimate kinase.